We begin with the raw amino-acid sequence, 185 residues long: Threonylcarbamoyl-AMP synthase (185 aa).

Positions 4 to 185 (SWRVQQAARE…LATGKVVRPS (182 aa)) constitute a YrdC-like domain.

It belongs to the SUA5 family. TsaC subfamily.

It is found in the cytoplasm. It carries out the reaction L-threonine + hydrogencarbonate + ATP = L-threonylcarbamoyladenylate + diphosphate + H2O. Required for the formation of a threonylcarbamoyl group on adenosine at position 37 (t(6)A37) in tRNAs that read codons beginning with adenine. Catalyzes the conversion of L-threonine, HCO(3)(-)/CO(2) and ATP to give threonylcarbamoyl-AMP (TC-AMP) as the acyladenylate intermediate, with the release of diphosphate. This is Threonylcarbamoyl-AMP synthase from Pseudomonas fluorescens (strain ATCC BAA-477 / NRRL B-23932 / Pf-5).